A 348-amino-acid polypeptide reads, in one-letter code: Galanin receptor type 1 (348 aa).

Topologically, residues 1-34 (MELAMVNLSEGNGSDPEPPAPESRPLFGIGVENF) are extracellular. N7 and N12 each carry an N-linked (GlcNAc...) asparagine glycan. Residues 35 to 55 (ITLVVFGLIFAMGVLGNSLVI) form a helical membrane-spanning segment. At 56-70 (TVLARSKPGKPRSTT) the chain is on the cytoplasmic side. A helical membrane pass occupies residues 71–91 (NLFILNLSIADLAYLLFCIPF). Residues 92 to 109 (QATVYALPTWVLGAFICK) lie on the Extracellular side of the membrane. C108 and C186 are joined by a disulfide. The helical transmembrane segment at 110–131 (FIHYFFTVSMLVSIFTLAAMSV) threads the bilayer. Residues 132-151 (DRYVAIVHSRRSSSLRVSRN) lie on the Cytoplasmic side of the membrane. Residues 152-172 (ALLGVGFIWALSIAMASPVAY) form a helical membrane-spanning segment. Residues 173-197 (HQRLFHRDSNQTFCWEQWPNKLHKK) are Extracellular-facing. N182 carries N-linked (GlcNAc...) asparagine glycosylation. The chain crosses the membrane as a helical span at residues 198-218 (AYVVCTFVFGYLLPLLLICFC). Over 219 to 247 (YAKVLNHLHKKLKNMSKKSEASKKKTAQT) the chain is Cytoplasmic. The helical transmembrane segment at 248 to 268 (VLVVVVVFGISWLPHHVVHLW) threads the bilayer. The Extracellular portion of the chain corresponds to 269 to 270 (AE). The chain crosses the membrane as a helical span at residues 271–291 (FGAFPLTPASFFFRITAHCLA). Residues 292-348 (YSNSSVNPIIYAFLSENFRKAYKQVFKCHVCDESPRSETKENKSRMDTPPSTNCTHV) lie on the Cytoplasmic side of the membrane. Residue C319 is the site of S-palmitoyl cysteine attachment. Positions 328-337 (SETKENKSRM) are enriched in basic and acidic residues. The disordered stretch occupies residues 328-348 (SETKENKSRMDTPPSTNCTHV).

It belongs to the G-protein coupled receptor 1 family. Interacts with GRP39 AND HTR1A. Post-translationally, three cysteine residues are found in the C-terminus, at least one of which may be palmitoylated. As to expression, expression is detected in brain, spinal cord, heart and skeletal muscle.

Its subcellular location is the cell membrane. Functionally, receptor for the hormone galanin. The activity of this receptor is mediated by G proteins that inhibit adenylate cyclase activity. The sequence is that of Galanin receptor type 1 (Galr1) from Mus musculus (Mouse).